Here is a 183-residue protein sequence, read N- to C-terminus: Ribosome maturation factor RimP (183 aa).

The protein belongs to the RimP family.

The protein localises to the cytoplasm. Functionally, required for maturation of 30S ribosomal subunits. This is Ribosome maturation factor RimP from Mycobacterium bovis (strain ATCC BAA-935 / AF2122/97).